Reading from the N-terminus, the 126-residue chain is Aspartate 1-decarboxylase (126 aa).

The active-site Schiff-base intermediate with substrate; via pyruvic acid is serine 25. Serine 25 is modified (pyruvic acid (Ser)). Threonine 57 contributes to the substrate binding site. Tyrosine 58 serves as the catalytic Proton donor. Residue 73-75 (GAA) participates in substrate binding.

The protein belongs to the PanD family. As to quaternary structure, heterooctamer of four alpha and four beta subunits. The cofactor is pyruvate. Post-translationally, is synthesized initially as an inactive proenzyme, which is activated by self-cleavage at a specific serine bond to produce a beta-subunit with a hydroxyl group at its C-terminus and an alpha-subunit with a pyruvoyl group at its N-terminus.

It localises to the cytoplasm. The enzyme catalyses L-aspartate + H(+) = beta-alanine + CO2. It participates in cofactor biosynthesis; (R)-pantothenate biosynthesis; beta-alanine from L-aspartate: step 1/1. In terms of biological role, catalyzes the pyruvoyl-dependent decarboxylation of aspartate to produce beta-alanine. This is Aspartate 1-decarboxylase from Sodalis glossinidius (strain morsitans).